The following is a 143-amino-acid chain: Large ribosomal subunit protein uL11 (143 aa).

This sequence belongs to the universal ribosomal protein uL11 family. As to quaternary structure, part of the ribosomal stalk of the 50S ribosomal subunit. Interacts with L10 and the large rRNA to form the base of the stalk. L10 forms an elongated spine to which L12 dimers bind in a sequential fashion forming a multimeric L10(L12)X complex. One or more lysine residues are methylated.

In terms of biological role, forms part of the ribosomal stalk which helps the ribosome interact with GTP-bound translation factors. This is Large ribosomal subunit protein uL11 from Burkholderia ambifaria (strain MC40-6).